The primary structure comprises 80 residues: Trefoil factor 3 (80 aa).

A signal peptide spans 1–21 (MEARMFWLLVVLLALASSSSA). The P-type domain maps to 30 to 73 (NQCAVPAKDRVDCGYPQVTPEQCNNRGCCFDSSIXGVPWCFKPL). Disulfide bonds link cysteine 32/cysteine 58, cysteine 42/cysteine 57, and cysteine 52/cysteine 69.

Monomer. Homodimer; disulfide-linked.

It localises to the secreted. It is found in the extracellular space. The protein resides in the extracellular matrix. Its subcellular location is the cytoplasm. In terms of biological role, involved in the maintenance and repair of the intestinal mucosa. Promotes the mobility of epithelial cells in healing processes (motogen). The polypeptide is Trefoil factor 3 (TFF3) (Sus scrofa (Pig)).